Here is a 293-residue protein sequence, read N- to C-terminus: NAD-dependent protein deacetylase (293 aa).

Positions 1–284 (MTVAITQTGP…QPPDPLHTAT (284 aa)) constitute a Deacetylase sirtuin-type domain. NAD(+) is bound by residues 27-47 (GAGC…GGWK) and 105-108 (QNVD). The Proton acceptor role is filled by histidine 123. Zn(2+) contacts are provided by cysteine 131, cysteine 134, cysteine 182, and cysteine 185. NAD(+) contacts are provided by residues 222 to 224 (GSS), 248 to 250 (NFG), and cysteine 266.

This sequence belongs to the sirtuin family. Class II subfamily. It depends on Zn(2+) as a cofactor.

The protein localises to the cytoplasm. The enzyme catalyses N(6)-acetyl-L-lysyl-[protein] + NAD(+) + H2O = 2''-O-acetyl-ADP-D-ribose + nicotinamide + L-lysyl-[protein]. NAD-dependent protein deacetylase which modulates the activities of several enzymes which are inactive in their acetylated form. This Xanthomonas campestris pv. campestris (strain 8004) protein is NAD-dependent protein deacetylase.